The following is a 195-amino-acid chain: Transcription repressor OFP17 (195 aa).

The 61-residue stretch at 130–190 (EDNAVEDACR…SRFYGELCRD (61 aa)) folds into the OVATE domain.

The protein resides in the nucleus. Transcriptional repressor that may regulate multiple aspects of plant growth and development through the regulation of BEL1-LIKE (BLH) and KNOX TALE (KNAT) homeodomain transcription factors. In Arabidopsis thaliana (Mouse-ear cress), this protein is Transcription repressor OFP17 (OFP17).